Reading from the N-terminus, the 473-residue chain is Notchless protein homolog (473 aa).

Residues 9 to 91 form a ubiquitin-like (UBL) domain region; sequence GKTVMCLLTD…VLTIVYQQQA (83 aa). 8 WD repeats span residues 107–146, 149–188, 192–236, 239–277, 313–354, 358–399, 400–439, and 442–473; these read GHAE…PLFT, GHKN…LEGS, GHKK…SIIC, GHTL…LIRE, EKQK…QPKK, GHQQ…TVFR, GHVG…LKQD, and GHAD…LWKG. The DWD box motif lies at 417–432; the sequence is LLSGSKDSTLKIWEIR.

It belongs to the NLE1/RSA4 family. As to quaternary structure, associates with the pre-60S ribosomal particle. In terms of tissue distribution, constitutively and ubiquitously expressed.

The protein resides in the nucleus. It localises to the nucleolus. Functionally, required for female gametophyte development. This is Notchless protein homolog from Arabidopsis thaliana (Mouse-ear cress).